We begin with the raw amino-acid sequence, 601 residues long: Elongation factor 4 (601 aa).

Residues 5–187 (DKIRNFSIIA…SIVKDLPAPQ (183 aa)) form the tr-type G domain. GTP contacts are provided by residues 17 to 22 (DHGKST) and 134 to 137 (NKVD).

This sequence belongs to the TRAFAC class translation factor GTPase superfamily. Classic translation factor GTPase family. LepA subfamily.

Its subcellular location is the cell inner membrane. The enzyme catalyses GTP + H2O = GDP + phosphate + H(+). Required for accurate and efficient protein synthesis under certain stress conditions. May act as a fidelity factor of the translation reaction, by catalyzing a one-codon backward translocation of tRNAs on improperly translocated ribosomes. Back-translocation proceeds from a post-translocation (POST) complex to a pre-translocation (PRE) complex, thus giving elongation factor G a second chance to translocate the tRNAs correctly. Binds to ribosomes in a GTP-dependent manner. This chain is Elongation factor 4, found in Maridesulfovibrio salexigens (strain ATCC 14822 / DSM 2638 / NCIMB 8403 / VKM B-1763) (Desulfovibrio salexigens).